Consider the following 702-residue polypeptide: Archaeal Lon protease (702 aa).

The interval 1-63 (MSNESTNDAP…VGVEGDVSID (63 aa)) is disordered. The Cytoplasmic portion of the chain corresponds to 1–183 (MSNESTNDAP…EARKRNQMRS (183 aa)). Acidic residues predominate over residues 10 to 48 (PPDDDPDDPEPSVDHDDTDGLQDDPADSVDDAGEVDDLE). Residue 117–124 (GSPGTGKS) participates in ATP binding. Residues 184–201 (FLMWIMILLAVGYALLIA) form a helical membrane-spanning segment. At 202 to 206 (TPARP) the chain is on the extracellular side. The helical transmembrane segment at 207 to 223 (LLALLSAAGIYLLFRYT) threads the bilayer. Topologically, residues 224 to 702 (NRGSDAMVPK…GTTGGNPSPQ (479 aa)) are cytoplasmic. Positions 487–667 (EEAVGRVNGL…SEVLDVALVG (181 aa)) constitute a Lon proteolytic domain. Residues serine 574 and lysine 617 contribute to the active site.

This sequence belongs to the peptidase S16 family. Archaeal LonB subfamily. Homohexamer. Organized in a ring with a central cavity.

It is found in the cell membrane. Functionally, ATP-dependent serine protease that mediates the selective degradation of mutant and abnormal proteins as well as certain short-lived regulatory proteins. Degrades polypeptides processively. In Halobacterium salinarum (strain ATCC 700922 / JCM 11081 / NRC-1) (Halobacterium halobium), this protein is Archaeal Lon protease.